Consider the following 68-residue polypeptide: Alpha-conotoxin Lp1.4 (68 aa).

The signal sequence occupies residues 1–21 (MGMRMMSIMFMLVVLATTVVS). Positions 22-48 (FTSDRALDAMNAAASKKASRLIALAVR) are excised as a propeptide. Cystine bridges form between cysteine 50–cysteine 56 and cysteine 51–cysteine 64. Residues 52 to 54 (SHP) are ser-Xaa-Pro motif, crucial for potent interaction with nAChR. An Aspartic acid 1-amide modification is found at aspartate 65.

The protein belongs to the conotoxin A superfamily. As to expression, expressed by the venom duct.

The protein resides in the secreted. Alpha-conotoxins act on postsynaptic membranes, they bind to the nicotinic acetylcholine receptors (nAChR) and thus inhibit them. This toxin inhibits mouse muscle alpha-1-beta-1-gamma-delta (CHRNA1-CHRNB1-CHRNG-CHRND), and weakly rat neuronal alpha-6/alpha-3-beta-2 (CHRNA6/CHRNA3-CHRNB2). This is Alpha-conotoxin Lp1.4 from Conus leopardus (Leopard cone).